The chain runs to 503 residues: ATP synthase subunit alpha (503 aa).

170–177 lines the ATP pocket; it reads GDRKTGKT.

The protein belongs to the ATPase alpha/beta chains family. F-type ATPases have 2 components, CF(1) - the catalytic core - and CF(0) - the membrane proton channel. CF(1) has five subunits: alpha(3), beta(3), gamma(1), delta(1), epsilon(1). CF(0) has four main subunits: a(1), b(1), b'(1) and c(9-12).

It is found in the cellular thylakoid membrane. It catalyses the reaction ATP + H2O + 4 H(+)(in) = ADP + phosphate + 5 H(+)(out). Its function is as follows. Produces ATP from ADP in the presence of a proton gradient across the membrane. The alpha chain is a regulatory subunit. The protein is ATP synthase subunit alpha of Synechocystis sp. (strain ATCC 27184 / PCC 6803 / Kazusa).